The sequence spans 718 residues: Auxin response factor 2 (718 aa).

The disordered stretch occupies residues 1–24; it reads MVGIDLNTVEEEEDEEEGGATGTV. A compositionally biased stretch (acidic residues) spans 8–18; sequence TVEEEEDEEEG. Positions 147–249 form a DNA-binding region, TF-B3; sequence FCKTLTASDT…ELRLGVRRAA (103 aa).

The protein belongs to the ARF family. In terms of assembly, homo and heterodimers. Expressed in roots, culms, leaves and young panicles.

It is found in the nucleus. Auxin response factors (ARFs) are transcriptional factors that bind specifically to the DNA sequence 5'-TGTCTC-3' found in the auxin-responsive promoter elements (AuxREs). The chain is Auxin response factor 2 (ARF2) from Oryza sativa subsp. japonica (Rice).